The following is a 106-amino-acid chain: UPF0145 protein Dhaf_3855 (106 aa).

Belongs to the UPF0145 family.

This is UPF0145 protein Dhaf_3855 from Desulfitobacterium hafniense (strain DSM 10664 / DCB-2).